We begin with the raw amino-acid sequence, 388 residues long: P2X purinoceptor 4 (388 aa).

The Cytoplasmic segment spans residues methionine 1–arginine 33. A helical membrane pass occupies residues alanine 34–tyrosine 54. Topologically, residues glutamine 55–asparagine 338 are extracellular. 2 residues coordinate ATP: lysine 67 and lysine 69. CTP is bound by residues lysine 67 and lysine 69. Residues asparagine 75 and asparagine 110 are each glycosylated (N-linked (GlcNAc...) asparagine). 3 disulfides stabilise this stretch: cysteine 116/cysteine 165, cysteine 126/cysteine 149, and cysteine 132/cysteine 159. 2 N-linked (GlcNAc...) asparagine glycosylation sites follow: asparagine 153 and asparagine 184. 2 residues coordinate ATP: threonine 186 and leucine 188. Threonine 186 contributes to the CTP binding site. Asparagine 199 and asparagine 208 each carry an N-linked (GlcNAc...) asparagine glycan. Intrachain disulfides connect cysteine 217/cysteine 227 and cysteine 261/cysteine 270. ATP is bound by residues asparagine 293, arginine 295, and lysine 313. The CTP site is built by asparagine 293, arginine 295, and lysine 313. Residues isoleucine 339 to tyrosine 359 traverse the membrane as a helical segment. At cysteine 360–glutamine 388 the chain is on the cytoplasmic side.

This sequence belongs to the P2X receptor family. As to quaternary structure, functional P2RXs are organized as homomeric and heteromeric trimers. Forms heterotrimer with P2RX1. Interacts with P2RX7 (via C-terminus); this interaction is functional only in the presence of ATP. Forms heterotrimer with P2RX4; functional differences between homomeric P2RX4 and P2RX4/6 heterotrimer are minor. Interacts with AP1M2.

It is found in the cell membrane. The protein localises to the lysosome membrane. It carries out the reaction K(+)(in) = K(+)(out). It catalyses the reaction Na(+)(in) = Na(+)(out). The catalysed reaction is Ca(2+)(in) = Ca(2+)(out). Activated by ATP. pH-dependent and inhibited by acidic pH. ATP-gated nonselective transmembrane cation channel permeable to potassium, sodium and calcium. CTP, but not GTP or UTP, functions as a weak affinity agonist for P2RX4. Activated by extracellularly released ATP, it plays multiple role in immunity and central nervous system physiology. Plays a key role in initial steps of T-cell activation and Ca(2+) microdomain formation. Also participates in basal T-cell activity without TCR/CD3 stimulation. Promotes the differentiation and activation of Th17 cells via expression of retinoic acid-related orphan receptor C/RORC. Upon activation, drives microglia motility via the PI3K/Akt pathway. Could also function as an ATP-gated cation channel of lysosomal membranes. The chain is P2X purinoceptor 4 (P2RX4) from Homo sapiens (Human).